A 131-amino-acid polypeptide reads, in one-letter code: Holo-[acyl-carrier-protein] synthase (131 aa).

Residues Asp-8 and Glu-59 each contribute to the Mg(2+) site.

This sequence belongs to the P-Pant transferase superfamily. AcpS family. It depends on Mg(2+) as a cofactor.

It is found in the cytoplasm. The enzyme catalyses apo-[ACP] + CoA = holo-[ACP] + adenosine 3',5'-bisphosphate + H(+). Functionally, transfers the 4'-phosphopantetheine moiety from coenzyme A to a Ser of acyl-carrier-protein. The chain is Holo-[acyl-carrier-protein] synthase from Rickettsia africae (strain ESF-5).